The primary structure comprises 1311 residues: MSRRKQAKPRSLKDPNCKLEDKTEDGEALDCKKRPEDGEELEDEAVHSCDSCLQVFESLSDITEHKINQCQLTDGVDVEDDPTCSWPASSPSSKDQTSPSHGEGCDFGEEEGGPGLPYPCQFCDKSFSRLSYLKHHEQSHSDKLPFKCTYCSRLFKHKRSRDRHIKLHTGDKKYHCSECDAAFSRSDHLKIHLKTHTSNKPYKCAICRRGFLSSSSLHGHMQVHERNKDGSQSGSRMEDWKMKDTQKCSQCEEGFDFPEDLQKHIAECHPECSPNEDRAALQCVYCHELFVEETSLMNHMEQVHSGEKKNSCSICSESFHTVEELYSHMDSHQQPESCNHSNSPSLVTVGYTSVSSTTPDSNLSVDSSTMVEAAPPIPKSRGRKRAAQQTPDMTGPSSKQAKVTYSCIYCNKQLFSSLAVLQIHLKTMHLDKPEQAHICQYCLEVLPSLYNLNEHLKQVHEAQDPGLIVSAMPAIVYQCNFCSEVVNDLNTLQEHIRCSHGFANPAAKDSNAFFCPHCYMGFLTDSSLEEHIRQVHCDLSGSRFGSPVLGTPKEPVVEVYSCSYCTNSPIFNSVLKLNKHIKENHKNIPLALNYIHNGKKSRALSPLSPVAIEQTSLKMMQAVGGAPARPTGEYICNQCGAKYTSLDSFQTHLKTHLDTVLPKLTCPQCNKEFPNQESLLKHVTIHFMITSTYYICESCDKQFTSVDDLQKHLLDMHTFVFFRCTLCQEVFDSKVSIQLHLAVKHSNEKKVYRCTSCNWDFRNETDLQLHVKHNHLENQGKVHKCIFCGESFGTEVELQCHITTHSKKYNCKFCSKAFHAIILLEKHLREKHCVFETKTPNCGTNGASEQVQKEEVELQTLLTNSQESHNSHDGSEEDVDTSEPMYGCDICGAAYTMETLLQNHQLRDHNIRPGESAIVKKKAELIKGNYKCNVCSRTFFSENGLREHMQTHLGPVKHYMCPICGERFPSLLTLTEHKVTHSKSLDTGNCRICKMPLQSEEEFLEHCQMHPDLRNSLTGFRCVVCMQTVTSTLELKIHGTFHMQKTGNGSAVQTTGRGQHVQKLYKCASCLKEFRSKQDLVKLDINGLPYGLCAGCVNLSKSASPGINVPPGTNRPGLGQNENLSAIEGKGKVGGLKTRCSSCNVKFESESELQNHIQTIHRELVPDSNSTQLKTPQVSPMPRISPSQSDEKKTYQCIKCQMVFYNEWDIQVHVANHMIDEGLNHECKLCSQTFDSPAKLQCHLIEHSFEGMGGTFKCPVCFTVFVQANKLQQHIFSAHGQEDKIYDCTQCPQKFFFQTELQNHTMTQHSS.

Over residues 1-10 (MSRRKQAKPR) the composition is skewed to basic residues. Residues 1 to 37 (MSRRKQAKPRSLKDPNCKLEDKTEDGEALDCKKRPED) form a disordered region. Residues 11 to 21 (SLKDPNCKLED) show a composition bias toward basic and acidic residues. The segment at 47 to 67 (HSCDSCLQVFESLSDITEHKI) adopts a C2H2-type 1; degenerate zinc-finger fold. The interval 81 to 108 (DPTCSWPASSPSSKDQTSPSHGEGCDFG) is disordered. Low complexity predominate over residues 87–102 (PASSPSSKDQTSPSHG). 7 consecutive C2H2-type zinc fingers follow at residues 118-140 (YPCQ…EQSH), 146-168 (FKCT…IKLH), 174-196 (YHCS…LKTH), 202-224 (YKCA…MQVH), 246-269 (QKCS…AECH), 281-304 (LQCV…EQVH), and 310-332 (NSCS…MDSH). Residues 349-358 (VGYTSVSSTT) are compositionally biased toward low complexity. Positions 349–397 (VGYTSVSSTTPDSNLSVDSSTMVEAAPPIPKSRGRKRAAQQTPDMTGPS) are disordered. 2 stretches are compositionally biased toward polar residues: residues 359-370 (PDSNLSVDSSTM) and 387-397 (AQQTPDMTGPS). A C2H2-type 9; degenerate zinc finger spans residues 405 to 429 (YSCIYCNKQLFSSLAVLQIHLKTMH). 3 consecutive C2H2-type zinc fingers follow at residues 437–460 (HICQ…KQVH), 477–500 (YQCN…RCSH), and 513–536 (FFCP…RQVH). Position 546 is a phosphoserine (Ser-546). A C2H2-type 13; atypical zinc finger spans residues 560–585 (YSCSYCTNSPIFNSVLKLNKHIKENH). Residues Ser-605 and Ser-608 each carry the phosphoserine modification. 7 C2H2-type zinc fingers span residues 634-656 (YICN…LKTH), 664-686 (LTCP…VTIH), 694-717 (YICE…LDMH), 722-745 (FRCT…AVKH), 752-775 (YRCT…KHNH), 783-805 (HKCI…ITTH), and 809-832 (YNCK…REKH). Residues 863–882 (TNSQESHNSHDGSEEDVDTS) form a disordered region. The C2H2-type 21; degenerate zinc-finger motif lies at 886–908 (YGCDICGAAYTMETLLQNHQLRD). 3 consecutive C2H2-type zinc fingers follow at residues 930–952 (YKCN…MQTH), 959–981 (YMCP…KVTH), and 1020–1042 (FRCV…GTFH). The segment at 1065 to 1083 (YKCASCLKEFRSKQDLVKL) adopts a C2H2-type 25; degenerate zinc-finger fold. The C2H2-type 26 zinc-finger motif lies at 1138–1161 (TRCSSCNVKFESESELQNHIQTIH). Lys-1146 is covalently cross-linked (Glycyl lysine isopeptide (Lys-Gly) (interchain with G-Cter in SUMO2)). The segment covering 1168–1178 (SNSTQLKTPQV) has biased composition (polar residues). Residues 1168–1188 (SNSTQLKTPQVSPMPRISPSQ) form a disordered region. 4 consecutive C2H2-type zinc fingers follow at residues 1195–1217 (YQCI…VANH), 1225–1247 (HECK…LIEH), 1256–1279 (FKCP…FSAH), and 1286–1309 (YDCT…MTQH).

Belongs to the krueppel C2H2-type zinc-finger protein family. In terms of assembly, interacts with EBF1. Interacts with SMAD1 and SMAD4. As to expression, predominantly expressed in hematopoietic cells. Present in organs and tissues that contain stem and progenitor cells, myeloid and/or lymphoid: placenta, spleen, lymph nodes, thymus, bone marrow and fetal liver. Within the hematopoietic system, it is abundant in CD34(+) cells but undetectable in mature peripheral blood leukocytes, and its levels rapidly decrease during the differentiation of CD34(+) cells in response to hemopoietins.

It localises to the nucleus. In terms of biological role, transcription factor that can both act as an activator or a repressor depending on the context. Involved in BMP signaling and in the regulation of the immature compartment of the hematopoietic system. Associates with SMADs in response to BMP2 leading to activate transcription of BMP target genes. Acts as a transcriptional repressor via its interaction with EBF1, a transcription factor involved specification of B-cell lineage; this interaction preventing EBF1 to bind DNA and activate target genes. In Homo sapiens (Human), this protein is Zinc finger protein 521 (ZNF521).